Consider the following 119-residue polypeptide: Small ribosomal subunit protein uS13 (119 aa).

The disordered stretch occupies residues 96 to 119 (PVRGQRTKTNARTRKGPRKLIKSR).

Belongs to the universal ribosomal protein uS13 family. In terms of assembly, part of the 30S ribosomal subunit. Forms a loose heterodimer with protein S19. Forms two bridges to the 50S subunit in the 70S ribosome.

Its function is as follows. Located at the top of the head of the 30S subunit, it contacts several helices of the 16S rRNA. In the 70S ribosome it contacts the 23S rRNA (bridge B1a) and protein L5 of the 50S subunit (bridge B1b), connecting the 2 subunits; these bridges are implicated in subunit movement. Contacts the tRNAs in the A and P-sites. The polypeptide is Small ribosomal subunit protein uS13 (Buchnera aphidicola subsp. Cinara cedri (strain Cc)).